The chain runs to 739 residues: MDSAARDKTQPALPTGLEWPEQERAEQLARGAALKWASGIFYRPEQLARLGQYRNREVQRTCSLEARIKSVVQSYLEGVKTGVWQLAQALEAVQGAREALGQARGLLRDMAEAAQTLEPLREQVVEHKQLQALSQLLPRLRAVPAAVAHTQTLIDAQRLLEAYVSLRELEQLQEETCVPLGGLELPVFEGLGPLAEALGQAVEAAAGAAGQLARENPALLVAAVRVAEVDAGCTTSLEQAPRDWRQRCLRALQQGLERVHFGTSLQPGPGELAKWLEALRVALPAELAMAEALVAPCCPPHYKVVQLWAHTLHGGLRRCLQQLLEGPELEEADTFTLLHWVLHVYQGPEMMGSLELGPEADVSDLEPLLTLENIEQLEATFVAKVQAKVAQWLQKALDGEVVEWGREQEPDTDLSGFYHSPLPAIVLQILEENIRVTRIVSVSLEQRVHGMALSELSAFLRSFTDALIRFSRDHLRGEAVVPHYVPYLLATLNHQLALSSSVSVLQPKWVVPGVLAPVEAELDKLQKRICRLVLEALLAELQPLFAALPSRRWLSSPELLDDVCKRTARFCQNFQHVRNPAVQLLLVEAERTVVLQYLSALMQGRLVCRGADERTQAAERMQHDAAQLQELFLGLGLEESVQCVPVLLALKELLNLRDPTLLGLVVAGLRQQFPDVSEDHVSALLDLRGDVSREQRLAALSSLRAGPQPSPQAGRRALFSLVPTPAPSLASCFPSGSCA.

Positions 1–370 (MDSAARDKTQ…DVSDLEPLLT (370 aa)) are mediates interaction with EXOC2, EXOC4 and EXOC5.

It belongs to the SEC6 family. As to quaternary structure, interacts with EXOC2, EXOC4 and EXOC5; may be part of the exocyst.

It localises to the cytoplasmic vesicle. Its subcellular location is the secretory vesicle. Its function is as follows. As part of the exocyst, may play a role in regulated exocytosis of insulin granules. The polypeptide is Exocyst complex component 3-like protein (EXOC3L1) (Bos taurus (Bovine)).